We begin with the raw amino-acid sequence, 311 residues long: tRNA-cytidine(32) 2-sulfurtransferase (311 aa).

The PP-loop motif motif lies at 47–52 (SGGKDS). Residues cysteine 122, cysteine 125, and cysteine 213 each coordinate [4Fe-4S] cluster.

This sequence belongs to the TtcA family. As to quaternary structure, homodimer. Mg(2+) serves as cofactor. The cofactor is [4Fe-4S] cluster.

The protein localises to the cytoplasm. It carries out the reaction cytidine(32) in tRNA + S-sulfanyl-L-cysteinyl-[cysteine desulfurase] + AH2 + ATP = 2-thiocytidine(32) in tRNA + L-cysteinyl-[cysteine desulfurase] + A + AMP + diphosphate + H(+). It participates in tRNA modification. Its function is as follows. Catalyzes the ATP-dependent 2-thiolation of cytidine in position 32 of tRNA, to form 2-thiocytidine (s(2)C32). The sulfur atoms are provided by the cysteine/cysteine desulfurase (IscS) system. The sequence is that of tRNA-cytidine(32) 2-sulfurtransferase from Enterobacter sp. (strain 638).